The chain runs to 57 residues: NADH dehydrogenase [ubiquinone] 1 beta subcomplex subunit 1 (57 aa).

A helical membrane pass occupies residues 10-26 (HWVHILVPAGFVFGCYL).

It belongs to the complex I NDUFB1 subunit family. In terms of assembly, complex I is composed of 45 different subunits.

The protein resides in the mitochondrion inner membrane. Functionally, accessory subunit of the mitochondrial membrane respiratory chain NADH dehydrogenase (Complex I) that is believed not to be involved in catalysis. Complex I functions in the transfer of electrons from NADH to the respiratory chain. The immediate electron acceptor for the enzyme is believed to be ubiquinone. The protein is NADH dehydrogenase [ubiquinone] 1 beta subcomplex subunit 1 (Ndufb1) of Mus musculus (Mouse).